Reading from the N-terminus, the 434-residue chain is Alpha-enolase (434 aa).

Mg(2+) is bound at residue Ser40. 2 residues coordinate substrate: His158 and Glu167. The Proton donor role is filled by Glu210. Mg(2+) is bound by residues Asp245, Glu293, and Asp318. Glu293 and Asp318 together coordinate substrate. Lys343 acts as the Proton acceptor in catalysis. Residues 370 to 373 (SHRS) and Lys394 contribute to the substrate site.

The protein belongs to the enolase family. As to quaternary structure, homodimer. The cofactor is Mg(2+).

It is found in the cytoplasm. It catalyses the reaction (2R)-2-phosphoglycerate = phosphoenolpyruvate + H2O. It functions in the pathway carbohydrate degradation; glycolysis; pyruvate from D-glyceraldehyde 3-phosphate: step 4/5. The sequence is that of Alpha-enolase from Sceloporus undulatus (Eastern fence lizard).